The following is a 2488-amino-acid chain: Neuron navigator 2 (2488 aa).

One can recognise a Calponin-homology (CH) domain in the interval 85-192 (GFDTQIYTDW…LFFSLSRYKQ (108 aa)). Composition is skewed to low complexity over residues 194 to 204 (QQQPQKQHLSS), 221 to 247 (QAGT…PHQQ), and 255 to 267 (QSSA…SQSK). 2 disordered regions span residues 194–675 (QQQP…GSNT) and 706–727 (TEGN…SHFT). Residues 299–315 (GGSTTANNRRSQSFNNY) show a composition bias toward polar residues. Low complexity predominate over residues 356 to 369 (SGSSSTPTNCSTSS). Positions 384–396 (KSLSVKHSATVSM) are enriched in polar residues. Residues 401–410 (PPGPEAPRPT) show a composition bias toward pro residues. The span at 492–506 (RTFSRALTNKKSSLK) shows a compositional bias: polar residues. A coiled-coil region spans residues 498–531 (LTNKKSSLKGNEKEKEKQQREKDKEKSKDLAKRA). Residues 507-547 (GNEKEKEKQQREKDKEKSKDLAKRASVTERLDLKEEPKEDP) show a composition bias toward basic and acidic residues. Low complexity predominate over residues 592 to 606 (MKSMPGKSPSAPAPS). Residues 615 to 626 (GKLSSGLPQQKP) show a composition bias toward polar residues. 2 stretches are compositionally biased toward low complexity: residues 633–642 (SSSSSSLASS) and 657–675 (SSQT…GSNT). Over residues 706 to 719 (TEGNVTAESSSTGV) the composition is skewed to polar residues. Residues 743-771 (EARRLRTVKNIADLRQNLEETMSSLRGTQ) adopt a coiled-coil conformation. Disordered stretches follow at residues 804-824 (LSWR…PSMG), 939-1151 (LGLG…QSGS), 1177-1200 (KSSA…NQDD), 1213-1283 (YRSL…SDNE), 1295-1338 (PAAQ…PIAT), 1355-1412 (MTQQ…TNAS), 1440-1460 (SLSS…ASSK), 1473-1560 (VKTT…VTSP), and 1591-1629 (SLSN…SFRD). Residues 939–985 (LGLGDADSWDDSSSVSSGISDTIDNLSTDDINTSSSISSYANTPASS) are compositionally biased toward low complexity. The segment covering 1091–1102 (KTDDAKVSEKGR) has biased composition (basic and acidic residues). The segment covering 1130-1142 (PSSSRTPTANANS) has biased composition (polar residues). The span at 1220–1245 (SKSNSRNGAGNRSSTSSIDSNISSKS) shows a compositional bias: low complexity. A compositionally biased stretch (polar residues) spans 1299–1309 (PVSSPAQTSLQ). Composition is skewed to low complexity over residues 1363–1380 (SPSG…PLYS) and 1388–1404 (SPLA…PSNS). Polar residues predominate over residues 1440 to 1456 (SLSSGGVPSHNSSTGLI). Residues 1477 to 1489 (LSESPLSSPAASP) are compositionally biased toward low complexity. 3 positions are modified to phosphoserine: Ser1480, Ser1484, and Ser1488. Composition is skewed to basic and acidic residues over residues 1498–1510 (RKQD…DRNT) and 1526–1535 (TQEDAKEWLR). A compositionally biased stretch (low complexity) spans 1549 to 1560 (SPFSSGSSVTSP). Residues 1686–1773 (EEKCQSEIRK…AAAQAAINGV (88 aa)) adopt a coiled-coil conformation. Disordered stretches follow at residues 1790–1887 (ADLR…LRNS) and 1951–1985 (AEND…MGLS). 3 stretches are compositionally biased toward polar residues: residues 1800–1820 (SDSV…SNIE), 1875–1887 (NGST…LRNS), and 1959–1985 (ESQG…MGLS). Residues 1897-1964 (MDSEAETVMQ…RLKSESQGSG (68 aa)) adopt a coiled-coil conformation. The residue at position 1977 (Ser1977) is a Phosphoserine. Residue 2157–2164 (GPSGTGKT) coordinates ATP. A disordered region spans residues 2423-2488 (DGYSMPREGS…ILDSSLESTL (66 aa)). Residues 2460 to 2473 (YSSPQSYDSDSNSN) are compositionally biased toward low complexity.

Belongs to the Nav/unc-53 family. As to expression, highly expressed in the brain, kidney and liver. Also expressed in the thyroid, mammary gland, spinal cord, heart, placenta and lung. Abundantly expressed in colon cancers.

The protein resides in the nucleus. It carries out the reaction ATP + H2O = ADP + phosphate + H(+). Possesses 3' to 5' helicase activity and exonuclease activity. Involved in neuronal development, specifically in the development of different sensory organs. The sequence is that of Neuron navigator 2 (NAV2) from Homo sapiens (Human).